We begin with the raw amino-acid sequence, 284 residues long: Bifunctional protein FolD (284 aa).

Residues 165-167 (GRS) and Ser190 each bind NADP(+).

The protein belongs to the tetrahydrofolate dehydrogenase/cyclohydrolase family. Homodimer.

It catalyses the reaction (6R)-5,10-methylene-5,6,7,8-tetrahydrofolate + NADP(+) = (6R)-5,10-methenyltetrahydrofolate + NADPH. The enzyme catalyses (6R)-5,10-methenyltetrahydrofolate + H2O = (6R)-10-formyltetrahydrofolate + H(+). The protein operates within one-carbon metabolism; tetrahydrofolate interconversion. Its function is as follows. Catalyzes the oxidation of 5,10-methylenetetrahydrofolate to 5,10-methenyltetrahydrofolate and then the hydrolysis of 5,10-methenyltetrahydrofolate to 10-formyltetrahydrofolate. The sequence is that of Bifunctional protein FolD from Streptococcus agalactiae serotype Ia (strain ATCC 27591 / A909 / CDC SS700).